Consider the following 379-residue polypeptide: 1-deoxy-D-xylulose 5-phosphate reductoisomerase (379 aa).

Residues Thr-10, Gly-11, Ser-12, Ile-13, Arg-38, Asn-39, and Asn-121 each coordinate NADPH. 1-deoxy-D-xylulose 5-phosphate is bound at residue Lys-122. Glu-123 lines the NADPH pocket. Mn(2+) is bound at residue Asp-147. 4 residues coordinate 1-deoxy-D-xylulose 5-phosphate: Ser-148, Glu-149, Ser-173, and His-196. Glu-149 is a binding site for Mn(2+). An NADPH-binding site is contributed by Gly-202. 4 residues coordinate 1-deoxy-D-xylulose 5-phosphate: Ser-209, Asn-214, Lys-215, and Glu-218. Position 218 (Glu-218) interacts with Mn(2+).

This sequence belongs to the DXR family. The cofactor is Mg(2+). Mn(2+) serves as cofactor.

It catalyses the reaction 2-C-methyl-D-erythritol 4-phosphate + NADP(+) = 1-deoxy-D-xylulose 5-phosphate + NADPH + H(+). It participates in isoprenoid biosynthesis; isopentenyl diphosphate biosynthesis via DXP pathway; isopentenyl diphosphate from 1-deoxy-D-xylulose 5-phosphate: step 1/6. Functionally, catalyzes the NADPH-dependent rearrangement and reduction of 1-deoxy-D-xylulose-5-phosphate (DXP) to 2-C-methyl-D-erythritol 4-phosphate (MEP). The protein is 1-deoxy-D-xylulose 5-phosphate reductoisomerase of Chlamydia trachomatis serovar A (strain ATCC VR-571B / DSM 19440 / HAR-13).